The sequence spans 395 residues: Na(+)/H(+) antiporter NhaA (395 aa).

12 helical membrane passes run alanine 18–leucine 38, leucine 64–valine 84, isoleucine 100–valine 120, glycine 129–leucine 149, phenylalanine 160–phenylalanine 180, histidine 182–leucine 202, phenylalanine 205–leucine 225, lysine 226–glycine 246, phenylalanine 266–methionine 286, leucine 295–leucine 315, isoleucine 333–leucine 353, and leucine 368–threonine 388.

The protein belongs to the NhaA Na(+)/H(+) (TC 2.A.33) antiporter family.

It is found in the cell inner membrane. It carries out the reaction Na(+)(in) + 2 H(+)(out) = Na(+)(out) + 2 H(+)(in). Its function is as follows. Na(+)/H(+) antiporter that extrudes sodium in exchange for external protons. This is Na(+)/H(+) antiporter NhaA from Histophilus somni (strain 129Pt) (Haemophilus somnus).